Reading from the N-terminus, the 319-residue chain is Cutinase cut1 (319 aa).

A signal peptide spans Met1–Ala58. Residue Tyr118 participates in poly(ethylene terephthalate) binding. The Nucleophile role is filled by Ser188. Met189 and Trp213 together coordinate poly(ethylene terephthalate). Residues Asp234 and His266 each act as charge relay system in the active site. A disulfide bridge connects residues Cys299 and Cys317.

It belongs to the AB hydrolase superfamily.

The protein resides in the secreted. Its subcellular location is the periplasm. It catalyses the reaction an acetyl ester + H2O = an aliphatic alcohol + acetate + H(+). The catalysed reaction is a butanoate ester + H2O = an aliphatic alcohol + butanoate + H(+). The enzyme catalyses pentanoate ester + H2O = pentanoate + an aliphatic alcohol + H(+). It carries out the reaction an octanoate ester + H2O = an aliphatic alcohol + octanoate + H(+). It catalyses the reaction decanoate ester + H2O = decanoate + an aliphatic alcohol + H(+). The catalysed reaction is a dodecanoate ester + H2O = an aliphatic alcohol + dodecanoate + H(+). The enzyme catalyses a tetradecanoate ester + H2O = an aliphatic alcohol + tetradecanoate + H(+). It carries out the reaction hexadecanoate ester + H2O = an aliphatic alcohol + hexadecanoate + H(+). It catalyses the reaction cutin + H2O = cutin monomers.. The catalysed reaction is (ethylene terephthalate)(n) + H2O = (ethylene terephthalate)(n-1) + 4-[(2-hydroxyethoxy)carbonyl]benzoate + H(+). With respect to regulation, activated by magnesium ions. Activated by calcium ions. In terms of biological role, catalyzes the hydrolysis of cutin, a polyester that forms the structure of plant cuticle. Shows esterase activity towards p-nitrophenol-linked aliphatic esters (pNP-aliphatic esters). Capable of degrading the plastic poly(ethylene terephthalate) (PET), the most abundant polyester plastic in the world. This is Cutinase cut1 from Thermobifida fusca (Thermomonospora fusca).